Consider the following 212-residue polypeptide: Large ribosomal subunit protein mL48 (212 aa).

Residues Met1 to Thr28 constitute a mitochondrion transit peptide. Lys199 carries the post-translational modification N6-succinyllysine.

It belongs to the mitochondrion-specific ribosomal protein mL48 family. In terms of assembly, component of the mitochondrial large ribosomal subunit (mt-LSU). Mature mammalian 55S mitochondrial ribosomes consist of a small (28S) and a large (39S) subunit. The 28S small subunit contains a 12S ribosomal RNA (12S mt-rRNA) and 30 different proteins. The 39S large subunit contains a 16S rRNA (16S mt-rRNA), a copy of mitochondrial valine transfer RNA (mt-tRNA(Val)), which plays an integral structural role, and 52 different proteins. mL48 is located at the central protuberance. Interacts with OXA1L.

It is found in the mitochondrion. The polypeptide is Large ribosomal subunit protein mL48 (MRPL48) (Homo sapiens (Human)).